The primary structure comprises 183 residues: uncharacterized protein (183 aa).

Helical transmembrane passes span 37 to 59 (LFGYISVGFLLFHPLLEVLPRQF), 79 to 98 (AILLGIAGWAVMLTLAVTSV), 110 to 132 (WRTFHGILAVVLITVVGYHVLVL), and 142 to 161 (AFYAVLLAGGYVTMIKTYVF).

Its subcellular location is the cell membrane. This is an uncharacterized protein from Archaeoglobus fulgidus (strain ATCC 49558 / DSM 4304 / JCM 9628 / NBRC 100126 / VC-16).